Here is a 386-residue protein sequence, read N- to C-terminus: Galactokinase (386 aa).

35–38 (EHTD) provides a ligand contact to substrate. ATP-binding positions include Ser-69 and 125 to 131 (GAGLSSS). 2 residues coordinate Mg(2+): Ser-131 and Glu-163. Asp-175 acts as the Proton acceptor in catalysis. Tyr-224 is a substrate binding site.

This sequence belongs to the GHMP kinase family. GalK subfamily.

The protein resides in the cytoplasm. It carries out the reaction alpha-D-galactose + ATP = alpha-D-galactose 1-phosphate + ADP + H(+). Its pathway is carbohydrate metabolism; galactose metabolism. Functionally, catalyzes the transfer of the gamma-phosphate of ATP to D-galactose to form alpha-D-galactose-1-phosphate (Gal-1-P). The protein is Galactokinase of Vibrio vulnificus (strain YJ016).